Consider the following 364-residue polypeptide: DNA replication and repair protein RecF (364 aa).

30-37 (GNNAQGKT) contacts ATP.

This sequence belongs to the RecF family.

The protein resides in the cytoplasm. In terms of biological role, the RecF protein is involved in DNA metabolism; it is required for DNA replication and normal SOS inducibility. RecF binds preferentially to single-stranded, linear DNA. It also seems to bind ATP. In Clostridium botulinum (strain Langeland / NCTC 10281 / Type F), this protein is DNA replication and repair protein RecF.